The chain runs to 179 residues: UPF0227 protein Sbal195_2522 (179 aa).

It belongs to the UPF0227 family.

This Shewanella baltica (strain OS195) protein is UPF0227 protein Sbal195_2522.